The following is a 55-amino-acid chain: MAKGAREKIKLESTAGTGHFYTTSKNKRTTPNKLEFNKYDPVVRKHVLYKEIKLK.

This sequence belongs to the bacterial ribosomal protein bL33 family.

This is Large ribosomal subunit protein bL33 from Aromatoleum aromaticum (strain DSM 19018 / LMG 30748 / EbN1) (Azoarcus sp. (strain EbN1)).